We begin with the raw amino-acid sequence, 101 residues long: MIPLGYFLIIGAILFGLGFAGIIINRKNLIVLLMCIELMLLAVNTNFIAFSQYLGARAGEIFVFFILTVAAAESAIGLAILVLFYRRRGSINVDDMNILKG.

A run of 3 helical transmembrane segments spans residues 4 to 24 (LGYFLIIGAILFGLGFAGIII), 30 to 50 (IVLLMCIELMLLAVNTNFIAF), and 61 to 81 (IFVFFILTVAAAESAIGLAIL).

This sequence belongs to the complex I subunit 4L family. In terms of assembly, NDH-1 is composed of 14 different subunits. Subunits NuoA, H, J, K, L, M, N constitute the membrane sector of the complex.

Its subcellular location is the cell inner membrane. The enzyme catalyses a quinone + NADH + 5 H(+)(in) = a quinol + NAD(+) + 4 H(+)(out). NDH-1 shuttles electrons from NADH, via FMN and iron-sulfur (Fe-S) centers, to quinones in the respiratory chain. The immediate electron acceptor for the enzyme in this species is believed to be ubiquinone. Couples the redox reaction to proton translocation (for every two electrons transferred, four hydrogen ions are translocated across the cytoplasmic membrane), and thus conserves the redox energy in a proton gradient. In Coxiella burnetii (strain CbuG_Q212) (Coxiella burnetii (strain Q212)), this protein is NADH-quinone oxidoreductase subunit K.